The sequence spans 219 residues: Cysteine dioxygenase (219 aa).

3 residues coordinate Fe cation: His106, His108, and His166. The segment at residues Cys113–Tyr183 is a cross-link (3'-(S-cysteinyl)-tyrosine (Cys-Tyr)).

This sequence belongs to the cysteine dioxygenase family. It depends on Fe cation as a cofactor. The thioether cross-link between Cys-113 and Tyr-183 plays a structural role through stabilizing the Fe(2+) ion, and prevents the production of highly damaging free hydroxyl radicals by holding the oxygen radical via hydroxyl hydrogen.

The enzyme catalyses L-cysteine + O2 = 3-sulfino-L-alanine + H(+). In terms of biological role, cysteine dioxygenase involved in sulfite formation from cysteine. Required for keratin degradation and plays an important role in filamentous growth and virulence. The sequence is that of Cysteine dioxygenase from Arthroderma benhamiae (Trichophyton mentagrophytes).